Reading from the N-terminus, the 570-residue chain is High-affinity hexose transporter HXT6 (570 aa).

Residues 1-60 (MSQDAAIAEQTPVEHLSAVDSASHSVLSTPSNKAERDEIKAYGEGEEHEPVVEIPKRPAS) lie on the Cytoplasmic side of the membrane. Residues 61–81 (AYVTVSIMCIMIAFGGFVFGW) form a helical membrane-spanning segment. The Extracellular portion of the chain corresponds to 82-116 (DTGTISGFINQTDFIRRFGMKHKDGTNYLSKVRTG). N-linked (GlcNAc...) asparagine glycosylation occurs at Asn-91. The helical transmembrane segment at 117–137 (LIVSIFNIGCAIGGIILSKLG) threads the bilayer. The Cytoplasmic portion of the chain corresponds to 138–143 (DMYGRK). A helical membrane pass occupies residues 144 to 164 (VGLIVVVVIYIIGIIIQIASI). Over 165–174 (NKWYQYFIGR) the chain is Extracellular. A helical transmembrane segment spans residues 175-195 (IISGLGVGGIAVLSPMLISEV). Residues 196–201 (SPKHLR) are Cytoplasmic-facing. A helical membrane pass occupies residues 202–222 (GTLVSCYQLMITAGIFLGYCT). The Extracellular segment spans residues 223–236 (NFGTKNYSNSVQWR). An N-linked (GlcNAc...) asparagine glycan is attached at Asn-228. The chain crosses the membrane as a helical span at residues 237–257 (VPLGLCFAWALFMIGGMTFVP). Residues 258–340 (ESPRYLAEVG…IQSLQQLTGD (83 aa)) are Cytoplasmic-facing. Residues 341–357 (NYFFYYGTTIFKAVGLS) form a helical membrane-spanning segment. At 358–363 (DSFETS) the chain is on the extracellular side. A helical membrane pass occupies residues 364–381 (IVLGIVNFASTFVGIYVV). Residues 382 to 388 (ERYGRRT) lie on the Cytoplasmic side of the membrane. Residues 389 to 409 (CLLWGAASMTACMVVYASVGV) traverse the membrane as a helical segment. The Extracellular segment spans residues 410-431 (TRLWPNGQDQPSSKGAGNCMIV). The helical transmembrane segment at 432–452 (FACFYIFCFATTWAPIPYVVV) threads the bilayer. Over 453-469 (SETFPLRVKSKAMSIAT) the chain is Cytoplasmic. A helical membrane pass occupies residues 470–490 (AANWLWGFLIGFFTPFITGAI). A topological domain (extracellular) is located at residue Asn-491. Residues 492-512 (FYYGYVFMGCLVFMFFYVLLV) form a helical membrane-spanning segment. Residues 513–570 (VPETKGLTLEEVNTMWEEGVLPWKSASWVPPSRRGANYDAEEMAHDDKPLYKRMFSTK) are Cytoplasmic-facing. Lys-560 participates in a covalent cross-link: Glycyl lysine isopeptide (Lys-Gly) (interchain with G-Cter in ubiquitin).

Belongs to the major facilitator superfamily. Sugar transporter (TC 2.A.1.1) family.

The protein resides in the membrane. Functionally, high-affinity glucose transporter. The protein is High-affinity hexose transporter HXT6 (HXT6) of Saccharomyces cerevisiae (strain ATCC 204508 / S288c) (Baker's yeast).